A 257-amino-acid chain; its full sequence is Pyridoxine 5'-phosphate synthase (257 aa).

N16 serves as a coordination point for 3-amino-2-oxopropyl phosphate. Residue 18 to 19 (DH) coordinates 1-deoxy-D-xylulose 5-phosphate. R27 contributes to the 3-amino-2-oxopropyl phosphate binding site. Catalysis depends on H52, which acts as the Proton acceptor. Residues R54 and H59 each contribute to the 1-deoxy-D-xylulose 5-phosphate site. The active-site Proton acceptor is E79. T109 serves as a coordination point for 1-deoxy-D-xylulose 5-phosphate. H200 serves as the catalytic Proton donor. 3-amino-2-oxopropyl phosphate-binding positions include G201 and 222–223 (GH).

The protein belongs to the PNP synthase family. In terms of assembly, homooctamer; tetramer of dimers.

It is found in the cytoplasm. It carries out the reaction 3-amino-2-oxopropyl phosphate + 1-deoxy-D-xylulose 5-phosphate = pyridoxine 5'-phosphate + phosphate + 2 H2O + H(+). It participates in cofactor biosynthesis; pyridoxine 5'-phosphate biosynthesis; pyridoxine 5'-phosphate from D-erythrose 4-phosphate: step 5/5. Catalyzes the complicated ring closure reaction between the two acyclic compounds 1-deoxy-D-xylulose-5-phosphate (DXP) and 3-amino-2-oxopropyl phosphate (1-amino-acetone-3-phosphate or AAP) to form pyridoxine 5'-phosphate (PNP) and inorganic phosphate. The polypeptide is Pyridoxine 5'-phosphate synthase (Burkholderia pseudomallei (strain K96243)).